The chain runs to 88 residues: Small ribosomal subunit protein uS17 (88 aa).

It belongs to the universal ribosomal protein uS17 family. In terms of assembly, part of the 30S ribosomal subunit.

One of the primary rRNA binding proteins, it binds specifically to the 5'-end of 16S ribosomal RNA. This is Small ribosomal subunit protein uS17 from Dechloromonas aromatica (strain RCB).